A 389-amino-acid chain; its full sequence is MPLPTNQLRLAMVAGEPSGDLLAASLLGGLRERLPESAQYYGIGGQRMIAQGFDSHWQMDKLTVRGYVEALGQIPEILRIRGELKRQLLAERPAAFIGVDAPDFNFNVEQAARDAGIPSIHFVCPSIWAWRGGRIKKIAKSVDHMLCLFPFEPAILDKAGVASTYVGHPLADDIPLEPDTHGARIALGLPADGPVIAVLPGSRRSEIALIGPTFFAAMALMQQREPGVRFVMPAATPALRELLQPLVDAHPQLALTITDGRSQVAMTAADAILVKSGTVTLEAALLKKPMVISYKVPWLTGQIMRRQGYLPYVGLPNILAGRFVVPELLQHFATPEALADATLTQLRDDANRRTLTEVFTEMHLSLRQNTAAKAAEAVVRVLEQRKGRA.

This sequence belongs to the LpxB family.

The enzyme catalyses a lipid X + a UDP-2-N,3-O-bis[(3R)-3-hydroxyacyl]-alpha-D-glucosamine = a lipid A disaccharide + UDP + H(+). It participates in bacterial outer membrane biogenesis; LPS lipid A biosynthesis. Condensation of UDP-2,3-diacylglucosamine and 2,3-diacylglucosamine-1-phosphate to form lipid A disaccharide, a precursor of lipid A, a phosphorylated glycolipid that anchors the lipopolysaccharide to the outer membrane of the cell. This Burkholderia orbicola (strain MC0-3) protein is Lipid-A-disaccharide synthase.